We begin with the raw amino-acid sequence, 156 residues long: Ribosomal RNA large subunit methyltransferase H (156 aa).

S-adenosyl-L-methionine-binding positions include leucine 73, glycine 104, and 123–128 (LSALTL).

The protein belongs to the RNA methyltransferase RlmH family. Homodimer.

The protein localises to the cytoplasm. It carries out the reaction pseudouridine(1915) in 23S rRNA + S-adenosyl-L-methionine = N(3)-methylpseudouridine(1915) in 23S rRNA + S-adenosyl-L-homocysteine + H(+). In terms of biological role, specifically methylates the pseudouridine at position 1915 (m3Psi1915) in 23S rRNA. The chain is Ribosomal RNA large subunit methyltransferase H from Shewanella frigidimarina (strain NCIMB 400).